Here is a 239-residue protein sequence, read N- to C-terminus: Probable transcriptional regulatory protein RBAM_007230 (239 aa).

Belongs to the TACO1 family. YeeN subfamily.

Its subcellular location is the cytoplasm. This is Probable transcriptional regulatory protein RBAM_007230 from Bacillus velezensis (strain DSM 23117 / BGSC 10A6 / LMG 26770 / FZB42) (Bacillus amyloliquefaciens subsp. plantarum).